Consider the following 236-residue polypeptide: Sperm flagellar protein 1 (236 aa).

A Calponin-homology (CH) domain is found at 7–112; that stretch reads EEALHQLYLW…VLIPLRQRLE (106 aa). Positions 118–177 are disordered; sequence RKQGIGSLQELAPQDGTDYMDVGLSQKARGEGVPDPQGRGQLREGRLPVPRPPGDSQALQ. The segment at 183 to 236 is essential for homodimerization and microtubule bundling activity; that stretch reads ILQIAEKEQELLASQETVQVLQMKVRRLEHLLQLKNVRIEDLSRRLQQAERKQR.

Homodimer. Interacts with actin, TJP1, CGN and CDH1.

The protein localises to the cytoplasm. It is found in the cell projection. It localises to the cilium. The protein resides in the flagellum. Its subcellular location is the cytoskeleton. The protein localises to the cilium axoneme. It is found in the apical cell membrane. It localises to the basolateral cell membrane. The protein resides in the stress fiber. Its subcellular location is the microvillus. The protein localises to the lamellipodium. It is found in the filopodium. In terms of biological role, microtubule-associated protein involved in the stabilization of microtubules along the axis of migration during radial intercalation. Promotes the establishment and stabilization of an axis of microtubules required for the active migration of cells into the outer epithelium. Microtubule-associated protein that promotes microtubule bundling and stabilizes microtubules against depolymerization in response to cold shock. Essential for ciliary central apparatus formation which requires both its microtubule-binding and bundling activities and for ciliary localization of HYDIN and SPAG6 in ependymal cilia. Binds actin in intestinal epithelial cells (IECs), essential for IECs survival and contributes to formation of filopodia and lamellipodia in migrating IECs. Regulates planar cell polarity signaling pathway and asymmetric microtubule accumulation in ciliated epithelia. The sequence is that of Sperm flagellar protein 1 (SPEF1) from Bos taurus (Bovine).